A 106-amino-acid chain; its full sequence is UPF0091 protein RC0354 (106 aa).

The protein belongs to the UPF0091 family.

This Rickettsia conorii (strain ATCC VR-613 / Malish 7) protein is UPF0091 protein RC0354.